A 397-amino-acid chain; its full sequence is Acetylornithine aminotransferase (397 aa).

Residue F129 coordinates pyridoxal 5'-phosphate. Residue R132 coordinates N(2)-acetyl-L-ornithine. A pyridoxal 5'-phosphate-binding site is contributed by 214–217 (DEVQ). K243 is subject to N6-(pyridoxal phosphate)lysine. Residue S271 participates in N(2)-acetyl-L-ornithine binding. Pyridoxal 5'-phosphate is bound at residue T272.

This sequence belongs to the class-III pyridoxal-phosphate-dependent aminotransferase family. ArgD subfamily. In terms of assembly, homodimer. The cofactor is pyridoxal 5'-phosphate.

The protein localises to the cytoplasm. It catalyses the reaction N(2)-acetyl-L-ornithine + 2-oxoglutarate = N-acetyl-L-glutamate 5-semialdehyde + L-glutamate. It participates in amino-acid biosynthesis; L-arginine biosynthesis; N(2)-acetyl-L-ornithine from L-glutamate: step 4/4. The chain is Acetylornithine aminotransferase from Neisseria meningitidis serogroup A / serotype 4A (strain DSM 15465 / Z2491).